Reading from the N-terminus, the 406-residue chain is Multifunctional CCA protein (406 aa).

Residues G8 and R11 each contribute to the ATP site. 2 residues coordinate CTP: G8 and R11. Mg(2+) contacts are provided by D21 and D23. ATP contacts are provided by R91, R137, and R140. CTP is bound by residues R91, R137, and R140. The HD domain maps to 228 to 329; sequence TGIHTLMVAQ…IKILNKFDVW (102 aa).

The protein belongs to the tRNA nucleotidyltransferase/poly(A) polymerase family. Bacterial CCA-adding enzyme type 1 subfamily. In terms of assembly, monomer. Can also form homodimers and oligomers. Mg(2+) serves as cofactor. Ni(2+) is required as a cofactor.

The enzyme catalyses a tRNA precursor + 2 CTP + ATP = a tRNA with a 3' CCA end + 3 diphosphate. The catalysed reaction is a tRNA with a 3' CCA end + 2 CTP + ATP = a tRNA with a 3' CCACCA end + 3 diphosphate. Functionally, catalyzes the addition and repair of the essential 3'-terminal CCA sequence in tRNAs without using a nucleic acid template. Adds these three nucleotides in the order of C, C, and A to the tRNA nucleotide-73, using CTP and ATP as substrates and producing inorganic pyrophosphate. tRNA 3'-terminal CCA addition is required both for tRNA processing and repair. Also involved in tRNA surveillance by mediating tandem CCA addition to generate a CCACCA at the 3' terminus of unstable tRNAs. While stable tRNAs receive only 3'-terminal CCA, unstable tRNAs are marked with CCACCA and rapidly degraded. The sequence is that of Multifunctional CCA protein from Vibrio campbellii (strain ATCC BAA-1116).